Here is a 355-residue protein sequence, read N- to C-terminus: Syntaxin-5 (355 aa).

The Cytoplasmic portion of the chain corresponds to 1-333 (MIPRKRYGSK…KYFQSVTSNR (333 aa)). The IxM motif; signal for cargo packaging into COPII-coated vesicles signature appears at 245–247 (IDM). A t-SNARE coiled-coil homology domain is found at 263-325 (DSYIQSRADT…EAAHSEILKY (63 aa)). Residues 287 to 318 (FQQLAHMVKEQEETIQRIDENVLGAQLDVEAA) are a coiled coil. A helical; Anchor for type IV membrane protein transmembrane segment spans residues 334-354 (WLMVKIFLILIVFFIIFVVFL). A topological domain (vesicular) is located at residue alanine 355.

It belongs to the syntaxin family. In terms of assembly, part of a ternary complex containing STX5A, NSFL1C and VCP. Part of a unique SNARE complex composed of the Golgi SNAREs GOSR1, GOSR2, YKT6 and VTI1A. Component of a SNARE complex consisting of STX5, YKT6, GOSR1 and BET1L. Interacts with BET1L. Interacts with BET1. Interacts with COG4. Interacts with GM130/GOLGA2. Interacts (via IxM motif) with SEC24C and SEC24D; mediates STX5 packaging into COPII-coated vesicles. Interacts with VLDLR; this interaction mediates VLDLR translocation from the endoplasmic reticulum to the plasma membrane.

It is found in the endoplasmic reticulum-Golgi intermediate compartment membrane. The protein resides in the golgi apparatus membrane. Its function is as follows. Mediates endoplasmic reticulum to Golgi transport. Together with p115/USO1 and GM130/GOLGA2, involved in vesicle tethering and fusion at the cis-Golgi membrane to maintain the stacked and inter-connected structure of the Golgi apparatus. Functionally, required for Golgi to endoplasmic reticulum retrogade transport, and for intra-Golgi transport. The chain is Syntaxin-5 (Stx5) from Mus musculus (Mouse).